Here is a 540-residue protein sequence, read N- to C-terminus: 2-isopropylmalate synthase (540 aa).

The Pyruvate carboxyltransferase domain maps to 8-269 (VLIFDTTLRD…YFNPFFGRAE (262 aa)). Mn(2+)-binding residues include Asp17, His208, His210, and Asn244. The segment at 408 to 540 (QLKLVQVSCG…ATPLDASPTL (133 aa)) is regulatory domain.

It belongs to the alpha-IPM synthase/homocitrate synthase family. LeuA type 1 subfamily. Homodimer. The cofactor is Mn(2+).

The protein resides in the cytoplasm. It catalyses the reaction 3-methyl-2-oxobutanoate + acetyl-CoA + H2O = (2S)-2-isopropylmalate + CoA + H(+). It participates in amino-acid biosynthesis; L-leucine biosynthesis; L-leucine from 3-methyl-2-oxobutanoate: step 1/4. Functionally, catalyzes the condensation of the acetyl group of acetyl-CoA with 3-methyl-2-oxobutanoate (2-ketoisovalerate) to form 3-carboxy-3-hydroxy-4-methylpentanoate (2-isopropylmalate). The polypeptide is 2-isopropylmalate synthase (Synechococcus sp. (strain WH7803)).